An 843-amino-acid chain; its full sequence is Beta-mannosidase B (843 aa).

The Proton donor role is filled by E430. A glycan (N-linked (GlcNAc...) asparagine) is linked at N721.

This sequence belongs to the glycosyl hydrolase 2 family. Beta-mannosidase B subfamily.

The enzyme catalyses Hydrolysis of terminal, non-reducing beta-D-mannose residues in beta-D-mannosides.. The protein operates within glycan metabolism; N-glycan degradation. Functionally, exoglycosidase that cleaves the single beta-linked mannose residue from the non-reducing end of beta-mannosidic oligosaccharides of various complexity and length. Prefers mannobiose over mannotriose and has no activity against polymeric mannan. Is also severely restricted by galactosyl substitutions at the +1 subsite. This chain is Beta-mannosidase B (mndB), found in Aspergillus terreus (strain NIH 2624 / FGSC A1156).